The chain runs to 947 residues: Bifunctional glutamine synthetase adenylyltransferase/adenylyl-removing enzyme (947 aa).

The tract at residues 1 to 440 (MTPLSSPLSQ…VFNELIGDDE (440 aa)) is adenylyl removase. An adenylyl transferase region spans residues 450-947 (SEPWREVWQD…ASWRKWLVAV (498 aa)).

The protein belongs to the GlnE family. Mg(2+) serves as cofactor.

It catalyses the reaction [glutamine synthetase]-O(4)-(5'-adenylyl)-L-tyrosine + phosphate = [glutamine synthetase]-L-tyrosine + ADP. The enzyme catalyses [glutamine synthetase]-L-tyrosine + ATP = [glutamine synthetase]-O(4)-(5'-adenylyl)-L-tyrosine + diphosphate. In terms of biological role, involved in the regulation of glutamine synthetase GlnA, a key enzyme in the process to assimilate ammonia. When cellular nitrogen levels are high, the C-terminal adenylyl transferase (AT) inactivates GlnA by covalent transfer of an adenylyl group from ATP to specific tyrosine residue of GlnA, thus reducing its activity. Conversely, when nitrogen levels are low, the N-terminal adenylyl removase (AR) activates GlnA by removing the adenylyl group by phosphorolysis, increasing its activity. The regulatory region of GlnE binds the signal transduction protein PII (GlnB) which indicates the nitrogen status of the cell. The sequence is that of Bifunctional glutamine synthetase adenylyltransferase/adenylyl-removing enzyme from Salmonella paratyphi C (strain RKS4594).